The primary structure comprises 59 residues: Single-pass membrane and coiled-coil domain-containing protein 4 (59 aa).

A disordered region spans residues 1 to 23 (MRQLKGKPKKETSKDKKERKQAM). Basic and acidic residues predominate over residues 9 to 22 (KKETSKDKKERKQA). A coiled-coil region spans residues 9 to 31 (KKETSKDKKERKQAMQEARQQIT). Residues 32-52 (TVVLPTLAVVVLLIVVFVYVA) traverse the membrane as a helical segment.

This sequence belongs to the SMCO4 family.

It is found in the membrane. The polypeptide is Single-pass membrane and coiled-coil domain-containing protein 4 (SMCO4) (Homo sapiens (Human)).